Consider the following 156-residue polypeptide: 17 kDa lipoprotein (156 aa).

The N-terminal stretch at Met1 to Leu21 is a signal peptide. Residue Cys22 is the site of N-palmitoyl cysteine attachment. Residue Cys22 is the site of S-diacylglycerol cysteine attachment.

It is found in the cell membrane. In Treponema pallidum (strain Nichols), this protein is 17 kDa lipoprotein (tpp17).